Consider the following 136-residue polypeptide: uncharacterized protein (136 aa).

Disordered stretches follow at residues 23-44 (QESLKSRIEDKNGDVASPKEDN) and 56-95 (DGVITSEEGCSSSGEKENSGLCSEESSEEDPEEAEEESAR). Residues 61-79 (SEEGCSSSGEKENSGLCSE) are compositionally biased toward low complexity. Positions 80–91 (ESSEEDPEEAEE) are enriched in acidic residues.

This is an uncharacterized protein from Saccharomyces cerevisiae (strain ATCC 204508 / S288c) (Baker's yeast).